Reading from the N-terminus, the 424-residue chain is Zygote arrest protein 1 (424 aa).

Disordered regions lie at residues 125-175 and 196-313; these read RTLQ…PMRF and GPGP…SPEL. Positions 141-150 are enriched in gly residues; the sequence is GAEGTTGGGS. The span at 289–298 shows a compositional bias: basic and acidic residues; sequence RARDGGDGRE. The 3CxxC-type zinc finger occupies 326–409; the sequence is KYGYYHCKDC…RQDLCGRCKG (84 aa).

Belongs to the ZAR1 family. As to quaternary structure, interacts with YBX2. Post-translationally, ubiquitinated and degradaded by the proteasome during oocyte meiotic maturation, leading to MARDO (mitochondria-associated ribonucleoprotein domain) membraneless compartment dissolution. Ovary and testis.

The protein resides in the cytoplasm. The protein localises to the cytoplasmic ribonucleoprotein granule. Functionally, mRNA-binding protein that mediates formation of MARDO (mitochondria-associated ribonucleoprotein domain), a membraneless compartment that stores maternal mRNAs in oocytes. MARDO assembly around mitochondria is directed by an increase in mitochondrial membrane potential during oocyte growth. Promotes formation of MARDO phase-separated membraneless compartment by undergoing liquid-liquid phase separation upon binding to maternal mRNAs. Binds to the 3'-UTR of maternal mRNAs. Maternal mRNAs stored in the MARDO are translationally repressed. Essential for female fertility and oocyte-to-embryo transition by coordinating maternal mRNA storage, translation and degradation. This Homo sapiens (Human) protein is Zygote arrest protein 1.